The chain runs to 223 residues: Thiamine-phosphate synthase (223 aa).

Residues 37-41 and asparagine 69 contribute to the 4-amino-2-methyl-5-(diphosphooxymethyl)pyrimidine site; that span reads QLREK. The Mg(2+) site is built by aspartate 70 and aspartate 89. Serine 108 serves as a coordination point for 4-amino-2-methyl-5-(diphosphooxymethyl)pyrimidine. 134–136 provides a ligand contact to 2-[(2R,5Z)-2-carboxy-4-methylthiazol-5(2H)-ylidene]ethyl phosphate; it reads TGT. Lysine 137 is a 4-amino-2-methyl-5-(diphosphooxymethyl)pyrimidine binding site. Residues glycine 167 and 187–188 each bind 2-[(2R,5Z)-2-carboxy-4-methylthiazol-5(2H)-ylidene]ethyl phosphate; that span reads VS. The segment at 197–223 is disordered; the sequence is AAATRKLQGSVDTASVESQLPSEEPSA. The segment covering 206-217 has biased composition (polar residues); it reads SVDTASVESQLP.

Belongs to the thiamine-phosphate synthase family. It depends on Mg(2+) as a cofactor.

It catalyses the reaction 2-[(2R,5Z)-2-carboxy-4-methylthiazol-5(2H)-ylidene]ethyl phosphate + 4-amino-2-methyl-5-(diphosphooxymethyl)pyrimidine + 2 H(+) = thiamine phosphate + CO2 + diphosphate. The enzyme catalyses 2-(2-carboxy-4-methylthiazol-5-yl)ethyl phosphate + 4-amino-2-methyl-5-(diphosphooxymethyl)pyrimidine + 2 H(+) = thiamine phosphate + CO2 + diphosphate. It carries out the reaction 4-methyl-5-(2-phosphooxyethyl)-thiazole + 4-amino-2-methyl-5-(diphosphooxymethyl)pyrimidine + H(+) = thiamine phosphate + diphosphate. It functions in the pathway cofactor biosynthesis; thiamine diphosphate biosynthesis; thiamine phosphate from 4-amino-2-methyl-5-diphosphomethylpyrimidine and 4-methyl-5-(2-phosphoethyl)-thiazole: step 1/1. Functionally, condenses 4-methyl-5-(beta-hydroxyethyl)thiazole monophosphate (THZ-P) and 2-methyl-4-amino-5-hydroxymethyl pyrimidine pyrophosphate (HMP-PP) to form thiamine monophosphate (TMP). This chain is Thiamine-phosphate synthase, found in Haloquadratum walsbyi (strain DSM 16790 / HBSQ001).